The sequence spans 245 residues: Probable phosphatase YcdX (245 aa).

His-7, His-9, His-15, His-40, Glu-73, His-101, His-131, Asp-192, and His-194 together coordinate Zn(2+).

The protein belongs to the PHP family. In terms of assembly, homotrimer. Zn(2+) serves as cofactor.

The chain is Probable phosphatase YcdX from Salmonella heidelberg (strain SL476).